The following is a 729-amino-acid chain: Solute carrier family 15 member 2 (729 aa).

A disordered region spans residues 1–34 (MNPFQKNESKETLFSPVSIEEVPPRPPSPPKKPS). At 1-57 (MNPFQKNESKETLFSPVSIEEVPPRPPSPPKKPSPTICGSNYPLSIAFIVVNEFCER) the chain is on the cytoplasmic side. A Phosphoserine modification is found at S9. T12 bears the Phosphothreonine mark. Residues 24-33 (PRPPSPPKKP) show a composition bias toward pro residues. S28 is subject to Phosphoserine. The helical transmembrane segment at 58–78 (FSYYGMKAVLILYFLYFLHWN) threads the bilayer. Over 79–83 (EDTST) the chain is Extracellular. The chain crosses the membrane as a helical span at residues 84-104 (SIYHAFSSLCYFTPILGAAIA). The Cytoplasmic segment spans residues 105–113 (DSWLGKFKT). Residues 114–134 (IIYLSLVYVLGHVIKSLGALP) form a helical membrane-spanning segment. The Extracellular segment spans residues 135 to 139 (ILGGQ). Residues 140–160 (VVHTVLSLIGLSLIALGTGGI) form a helical membrane-spanning segment. Residues 161-183 (KPCVAAFGGDQFEEKHAEERTRY) are Cytoplasmic-facing. The helical transmembrane segment at 184 to 204 (FSVFYLSINAGSLISTFITPM) threads the bilayer. The Extracellular segment spans residues 205–217 (LRGDVQCFGEDCY). A helical transmembrane segment spans residues 218-238 (ALAFGVPGLLMVIALVVFAMG). Topologically, residues 239–295 (SKIYNKPPPEGNIVAQVFKCIWFAISNRFKNRSGDIPKRQHWLDWAAEKYPKQLIMD) are cytoplasmic. Residues 296 to 316 (VKALTRVLFLYIPLPMFWALL) traverse the membrane as a helical segment. The Extracellular portion of the chain corresponds to 317–343 (DQQGSRWTLQAIRMNRNLGFFVLQPDQ). The chain crosses the membrane as a helical span at residues 344–364 (MQVLNPLLVLIFIPLFDFVIY). At 365 to 380 (RLVSKCGINFSSLRKM) the chain is on the cytoplasmic side. The helical transmembrane segment at 381-401 (AVGMILACLAFAVAAAVEIKI) threads the bilayer. The Extracellular portion of the chain corresponds to 402–611 (NEMAPAQPGP…PANKMSIAWQ (210 aa)). The extracellular domain (ECD) stretch occupies residues 402-611 (NEMAPAQPGP…PANKMSIAWQ (210 aa)). 5 N-linked (GlcNAc...) asparagine glycosylation sites follow: N435, N472, N528, N567, and N587. A helical transmembrane segment spans residues 612–632 (LPQYALVTAGEVMFSVTGLEF). At 633 to 643 (SYSQAPSSMKS) the chain is on the cytoplasmic side. The helical transmembrane segment at 644-664 (VLQAAWLLTIAVGNIIVLVVA) threads the bilayer. At 665 to 674 (QFSGLVQWAE) the chain is on the extracellular side. A helical transmembrane segment spans residues 675-695 (FILFSCLLLVICLIFSIMGYY). The Cytoplasmic portion of the chain corresponds to 696–729 (YVPVKTEDMRGPADKHIPHIQGNMIKLETKKTKL).

It belongs to the major facilitator superfamily. Proton-dependent oligopeptide transporter (POT/PTR) (TC 2.A.17) family. As to quaternary structure, interacts (via extracellular domain region) with trypsin. As to expression, expressed in kidney. Not detected in intestine. Highly expressed in macrophages.

It localises to the apical cell membrane. Its subcellular location is the cytoplasmic vesicle. The protein localises to the phagosome membrane. It is found in the cell membrane. It catalyses the reaction a dipeptide(out) + 2 H(+)(out) = a dipeptide(in) + 2 H(+)(in). The catalysed reaction is N-acetyl-D-muramoyl-L-alanyl-D-isoglutamine(out) + 3 H(+)(out) = N-acetyl-D-muramoyl-L-alanyl-D-isoglutamine(in) + 3 H(+)(in). The enzyme catalyses glycyl-L-leucine(out) + 2 H(+)(out) = glycyl-L-leucine(in) + 2 H(+)(in). It carries out the reaction glycyl-L-lysine(out) + 2 H(+)(out) = glycyl-L-lysine(in) + 2 H(+)(in). It catalyses the reaction glycyl-L-glutamate(out) + 3 H(+)(out) = glycyl-L-glutamate(in) + 3 H(+)(in). The catalysed reaction is L-alanyl-L-alanine(out) + 2 H(+)(out) = L-alanyl-L-alanine(in) + 2 H(+)(in). The enzyme catalyses an L-amino acid tripeptide(out) + 2 H(+)(out) = an L-amino acid tripeptide(in) + 2 H(+)(in). It carries out the reaction carnosine(out) + 2 H(+)(out) = carnosine(in) + 2 H(+)(in). In terms of biological role, proton-coupled amino-acid transporter that transports oligopeptides of 2 to 4 amino acids with a preference for dipeptides. Transports neutral and anionic dipeptides with a proton to peptide stoichiometry of 2:1 or 3:1. In kidney, involved in the absorption of circulating di- and tripeptides from the glomerular filtrate. Can also transport beta-lactam antibiotics, such as the aminocephalosporin cefadroxil, and other antiviral and anticancer drugs. Transports the dipeptide-like aminopeptidase inhibitor bestatin. Also able to transport carnosine. Involved in innate immunity by promoting the detection of microbial pathogens by NOD-like receptors (NLRs). Mediates transport of bacterial peptidoglycans across the plasma membrane or, in macrophages, the phagosome membrane: catalyzes the transport of certain bacterial peptidoglycans, such as muramyl dipeptide (MDP), the NOD2 ligand. In Homo sapiens (Human), this protein is Solute carrier family 15 member 2.